The chain runs to 79 residues: Acyl carrier protein (79 aa).

The Carrier domain occupies 2–77 (ENIEQRVKKI…QAIDYVTAHL (76 aa)). S37 is subject to O-(pantetheine 4'-phosphoryl)serine.

It belongs to the acyl carrier protein (ACP) family. Post-translationally, 4'-phosphopantetheine is transferred from CoA to a specific serine of apo-ACP by AcpS. This modification is essential for activity because fatty acids are bound in thioester linkage to the sulfhydryl of the prosthetic group.

Its subcellular location is the cytoplasm. The protein operates within lipid metabolism; fatty acid biosynthesis. Carrier of the growing fatty acid chain in fatty acid biosynthesis. The protein is Acyl carrier protein of Laribacter hongkongensis (strain HLHK9).